We begin with the raw amino-acid sequence, 445 residues long: N-succinylarginine dihydrolase (445 aa).

Residues 19-28 (AGLSYGNVAS), Asn110, and 137-138 (HR) contribute to the substrate site. Residue Glu174 is part of the active site. Residue Arg214 coordinates substrate. His250 is an active-site residue. Asp252 and Asn363 together coordinate substrate. Cys369 serves as the catalytic Nucleophile.

Belongs to the succinylarginine dihydrolase family. As to quaternary structure, homodimer.

The catalysed reaction is N(2)-succinyl-L-arginine + 2 H2O + 2 H(+) = N(2)-succinyl-L-ornithine + 2 NH4(+) + CO2. The protein operates within amino-acid degradation; L-arginine degradation via AST pathway; L-glutamate and succinate from L-arginine: step 2/5. Its function is as follows. Catalyzes the hydrolysis of N(2)-succinylarginine into N(2)-succinylornithine, ammonia and CO(2). The protein is N-succinylarginine dihydrolase of Shewanella loihica (strain ATCC BAA-1088 / PV-4).